A 143-amino-acid polypeptide reads, in one-letter code: Nucleoside diphosphate kinase (143 aa).

ATP contacts are provided by lysine 11, phenylalanine 59, arginine 87, threonine 93, arginine 104, and asparagine 114. Histidine 117 acts as the Pros-phosphohistidine intermediate in catalysis.

Belongs to the NDK family. As to quaternary structure, homotetramer. Requires Mg(2+) as cofactor.

It localises to the cytoplasm. It carries out the reaction a 2'-deoxyribonucleoside 5'-diphosphate + ATP = a 2'-deoxyribonucleoside 5'-triphosphate + ADP. The catalysed reaction is a ribonucleoside 5'-diphosphate + ATP = a ribonucleoside 5'-triphosphate + ADP. Major role in the synthesis of nucleoside triphosphates other than ATP. The ATP gamma phosphate is transferred to the NDP beta phosphate via a ping-pong mechanism, using a phosphorylated active-site intermediate. This Escherichia coli O7:K1 (strain IAI39 / ExPEC) protein is Nucleoside diphosphate kinase.